The chain runs to 461 residues: GTPase Der (461 aa).

EngA-type G domains are found at residues 2–166 (IKVA…PKKP) and 199–370 (IKVA…KNYS). GTP contacts are provided by residues 8 to 15 (GKPNVGKS), 57 to 61 (DTGGL), 118 to 121 (NKID), 205 to 212 (GRVNVGKS), 252 to 256 (DTAGI), and 316 to 319 (NKWD). Residues 371–455 (KRIPTATLNK…PIIFVARKKG (85 aa)) enclose the KH-like domain.

This sequence belongs to the TRAFAC class TrmE-Era-EngA-EngB-Septin-like GTPase superfamily. EngA (Der) GTPase family. In terms of assembly, associates with the 50S ribosomal subunit.

Its function is as follows. GTPase that plays an essential role in the late steps of ribosome biogenesis. In Nautilia profundicola (strain ATCC BAA-1463 / DSM 18972 / AmH), this protein is GTPase Der.